Consider the following 287-residue polypeptide: Uroplakin-3a (287 aa).

An N-terminal signal peptide occupies residues 1 to 18; sequence MLLLWALLALGCLRCGWT. At 19–207 the chain is on the lumenal side; the sequence is VNLQPQLASV…DTWPGRRSGG (189 aa). N-linked (GlcNAc...) asparagine glycans are attached at residues Asn74, Asn139, and Asn170. Residues 208 to 235 traverse the membrane as a helical segment; the sequence is MIVITSILGSLPFFLLVGFAGAIILSFV. Residues 236–287 are Cytoplasmic-facing; it reads DMGSSDGEMTHDSQITQEAVPKTLGTSEPSYSSVNRGPPLDRAEVFSSKLQD. The disordered stretch occupies residues 243-287; the sequence is EMTHDSQITQEAVPKTLGTSEPSYSSVNRGPPLDRAEVFSSKLQD. Residues 259-270 are compositionally biased toward polar residues; that stretch reads LGTSEPSYSSVN.

This sequence belongs to the uroplakin-3 family. In terms of assembly, heterodimer with uroplakin-1B (UPK1B).

It localises to the endoplasmic reticulum membrane. Its function is as follows. Component of the asymmetric unit membrane (AUM); a highly specialized biomembrane elaborated by terminally differentiated urothelial cells. May play an important role in AUM-cytoskeleton interaction in terminally differentiated urothelial cells. It also contributes to the formation of urothelial glycocalyx which may play an important role in preventing bacterial adherence. This Mus musculus (Mouse) protein is Uroplakin-3a (Upk3a).